The chain runs to 427 residues: Peptidase B (427 aa).

Lys-195 and Asp-200 together coordinate Mn(2+). Lys-207 is an active-site residue. The Mn(2+) site is built by Asp-218, Asp-277, and Glu-279. Arg-281 is an active-site residue.

This sequence belongs to the peptidase M17 family. In terms of assembly, homohexamer. It depends on Mn(2+) as a cofactor.

It localises to the cytoplasm. It catalyses the reaction Release of an N-terminal amino acid, Xaa, from a peptide or arylamide. Xaa is preferably Glu or Asp but may be other amino acids, including Leu, Met, His, Cys and Gln.. Its function is as follows. Probably plays an important role in intracellular peptide degradation. This Citrobacter koseri (strain ATCC BAA-895 / CDC 4225-83 / SGSC4696) protein is Peptidase B.